A 134-amino-acid polypeptide reads, in one-letter code: Global transcriptional regulator Spx (134 aa).

A disulfide bridge links C10 with C13.

The protein belongs to the ArsC family. Spx subfamily. In terms of assembly, interacts with the C-terminal domain of the alpha subunit of the RNAP.

Its subcellular location is the cytoplasm. Global transcriptional regulator that plays a key role in stress response and exerts either positive or negative regulation of genes. Acts by interacting with the C-terminal domain of the alpha subunit of the RNA polymerase (RNAP). This interaction can enhance binding of RNAP to the promoter region of target genes and stimulate their transcription, or block interaction of RNAP with activator. This is Global transcriptional regulator Spx from Streptococcus pyogenes serotype M6 (strain ATCC BAA-946 / MGAS10394).